We begin with the raw amino-acid sequence, 380 residues long: Cytochrome b (380 aa).

The next 4 helical transmembrane spans lie at 34-54 (FGSL…LLAM), 78-99 (WLIR…YMHI), 114-134 (WNTG…GYVL), and 179-199 (FFAL…IHLT). His-84 and His-98 together coordinate heme b. The heme b site is built by His-183 and His-197. His-202 contributes to the a ubiquinone binding site. 4 helical membrane passes run 227–247 (LKDI…ALFT), 289–309 (LGGV…PLLH), 321–341 (LSQS…WVGS), and 348–368 (FIII…ILLP).

It belongs to the cytochrome b family. In terms of assembly, the cytochrome bc1 complex contains 11 subunits: 3 respiratory subunits (MT-CYB, CYC1 and UQCRFS1), 2 core proteins (UQCRC1 and UQCRC2) and 6 low-molecular weight proteins (UQCRH/QCR6, UQCRB/QCR7, UQCRQ/QCR8, UQCR10/QCR9, UQCR11/QCR10 and a cleavage product of UQCRFS1). This cytochrome bc1 complex then forms a dimer. The cofactor is heme b.

Its subcellular location is the mitochondrion inner membrane. Component of the ubiquinol-cytochrome c reductase complex (complex III or cytochrome b-c1 complex) that is part of the mitochondrial respiratory chain. The b-c1 complex mediates electron transfer from ubiquinol to cytochrome c. Contributes to the generation of a proton gradient across the mitochondrial membrane that is then used for ATP synthesis. The chain is Cytochrome b (MT-CYB) from Falco peregrinus (Peregrine falcon).